The following is a 273-amino-acid chain: Phosphate import ATP-binding protein PstB (273 aa).

The ABC transporter domain maps to 17–259 (LSAENLSIFY…DKTNNIFQNP (243 aa)). 49-56 (GPSGCGKS) is an ATP binding site.

It belongs to the ABC transporter superfamily. Phosphate importer (TC 3.A.1.7) family. The complex is composed of two ATP-binding proteins (PstB), two transmembrane proteins (PstC and PstA) and a solute-binding protein (PstS).

The protein localises to the cell inner membrane. It catalyses the reaction phosphate(out) + ATP + H2O = ADP + 2 phosphate(in) + H(+). Its function is as follows. Part of the ABC transporter complex PstSACB involved in phosphate import. Responsible for energy coupling to the transport system. This is Phosphate import ATP-binding protein PstB from Trichodesmium erythraeum (strain IMS101).